Here is a 651-residue protein sequence, read N- to C-terminus: tRNA uridine 5-carboxymethylaminomethyl modification enzyme MnmG (651 aa).

11-16 (GAGHAG) is a binding site for FAD. Residue 296–310 (GPRYCPSIEDKIVRF) coordinates NAD(+).

It belongs to the MnmG family. In terms of assembly, homodimer. Heterotetramer of two MnmE and two MnmG subunits. The cofactor is FAD.

It localises to the cytoplasm. In terms of biological role, NAD-binding protein involved in the addition of a carboxymethylaminomethyl (cmnm) group at the wobble position (U34) of certain tRNAs, forming tRNA-cmnm(5)s(2)U34. In Chloroflexus aurantiacus (strain ATCC 29366 / DSM 635 / J-10-fl), this protein is tRNA uridine 5-carboxymethylaminomethyl modification enzyme MnmG.